The following is a 465-amino-acid chain: Methionine aminopeptidase 2-2 (465 aa).

A compositionally biased stretch (basic and acidic residues) spans 1–13 (MGSKTPNDHRRGP). A disordered region spans residues 1–92 (MGSKTPNDHR…KKKTLLGGLQ (92 aa)). The span at 44 to 55 (GETEDGEDEDDD) shows a compositional bias: acidic residues. Basic residues predominate over residues 71–86 (TKKKNKRKKNKKKKKT). H217 contacts substrate. Residues D238, D249, and H318 each coordinate a divalent metal cation. Substrate is bound at residue H326. E351 and E446 together coordinate a divalent metal cation.

This sequence belongs to the peptidase M24A family. Methionine aminopeptidase eukaryotic type 2 subfamily. It depends on Co(2+) as a cofactor. The cofactor is Zn(2+). Requires Mn(2+) as cofactor. Fe(2+) is required as a cofactor.

It localises to the cytoplasm. The enzyme catalyses Release of N-terminal amino acids, preferentially methionine, from peptides and arylamides.. Functionally, cotranslationally removes the N-terminal methionine from nascent proteins. The N-terminal methionine is often cleaved when the second residue in the primary sequence is small and uncharged (Met-Ala-, Cys, Gly, Pro, Ser, Thr, or Val). The polypeptide is Methionine aminopeptidase 2-2 (Ajellomyces dermatitidis (strain ER-3 / ATCC MYA-2586) (Blastomyces dermatitidis)).